The chain runs to 184 residues: Small ribosomal subunit protein eS8 (184 aa).

Residues 1-23 (MGISRDSRHKRRLTGGRYPVHKK) form a disordered region. Residues 7–23 (SRHKRRLTGGRYPVHKK) show a composition bias toward basic residues.

It belongs to the eukaryotic ribosomal protein eS8 family.

The polypeptide is Small ribosomal subunit protein eS8 (RPS8) (Theileria annulata).